A 478-amino-acid chain; its full sequence is Bifunctional protein HldE (478 aa).

The ribokinase stretch occupies residues 1–318; it reads MKVTLPDFRQ…ENAIRGRADT (318 aa). Position 195-198 (195-198) interacts with ATP; sequence NLSE. The active site involves aspartate 264. Residues 344–478 form a cytidylyltransferase region; that stretch reads MTNGCFDILH…NTIKANASKS (135 aa).

This sequence in the N-terminal section; belongs to the carbohydrate kinase PfkB family. In the C-terminal section; belongs to the cytidylyltransferase family. As to quaternary structure, homodimer.

It carries out the reaction D-glycero-beta-D-manno-heptose 7-phosphate + ATP = D-glycero-beta-D-manno-heptose 1,7-bisphosphate + ADP + H(+). The enzyme catalyses D-glycero-beta-D-manno-heptose 1-phosphate + ATP + H(+) = ADP-D-glycero-beta-D-manno-heptose + diphosphate. It functions in the pathway nucleotide-sugar biosynthesis; ADP-L-glycero-beta-D-manno-heptose biosynthesis; ADP-L-glycero-beta-D-manno-heptose from D-glycero-beta-D-manno-heptose 7-phosphate: step 1/4. The protein operates within nucleotide-sugar biosynthesis; ADP-L-glycero-beta-D-manno-heptose biosynthesis; ADP-L-glycero-beta-D-manno-heptose from D-glycero-beta-D-manno-heptose 7-phosphate: step 3/4. Its function is as follows. Catalyzes the phosphorylation of D-glycero-D-manno-heptose 7-phosphate at the C-1 position to selectively form D-glycero-beta-D-manno-heptose-1,7-bisphosphate. Catalyzes the ADP transfer from ATP to D-glycero-beta-D-manno-heptose 1-phosphate, yielding ADP-D-glycero-beta-D-manno-heptose. This is Bifunctional protein HldE from Pectobacterium carotovorum subsp. carotovorum (strain PC1).